A 276-amino-acid polypeptide reads, in one-letter code: 3' cyclic ADP-D-ribose synthase HopAM1 (276 aa).

Positions 20 to 38 (VEASQVKSAGTSSTTNIDS) are enriched in polar residues. The interval 20-39 (VEASQVKSAGTSSTTNIDSK) is disordered. The TIR domain stretch occupies residues 165–214 (KNGIAHAKKMAFFITPEWLGSDFCKQEFQWLSETKNKDIKSAFVIFKDVD). The active site involves glutamine 190.

In terms of assembly, homodimer.

The protein localises to the host cytoplasm. Its subcellular location is the host cytosol. It carries out the reaction NAD(+) = 3'cADPR + nicotinamide + H(+). NAD(+) hydrolase (NADase) that cleaves NAD(+) into nicotinamide and 3' cyclic ADP-D-ribose (3'cADPR, v2-cADPR). Upon infiltration of A.thaliana with this bacteria an effector-triggered immunity-like phenotype (ETI-like, cell death with severe chlorosis) is seen, 3'cADPR levels rise while NAD(+) levels remain constant. Plant immune responses are suppressed. Triggers hypersensitive response-like cell death in Nicotiana tabacum cv. Xanthi and N.benthamiana when transiently expressed, depletes NAD(+) in N.benthamiana. Causes cell death upon induction in yeast due to NAD(+) depletion and/or 3'cADPR itself. Transgenic A.thaliana expressing HopAM1 suppresses its plant immune system upon challenge; the plants produce 3'cADPR without significantly depleting NAD(+). This is 3' cyclic ADP-D-ribose synthase HopAM1 from Pseudomonas syringae pv. tomato (strain ATCC BAA-871 / DC3000).